We begin with the raw amino-acid sequence, 887 residues long: Serine/threonine-protein kinase greatwall (887 aa).

In terms of domain architecture, Protein kinase spans 32-843 (FGIVKPISRG…LKDLKAHPLF (812 aa)). Residues 38 to 46 (ISRGAFGKV) and Lys-61 contribute to the ATP site. Asp-155 functions as the Proton acceptor in the catalytic mechanism. Residues Thr-221 and Thr-244 each carry the phosphothreonine; by CDK1; in vitro modification. The segment at 321-353 (DAEAPPYFNSSRVKDSSSEQARSKKPTGSSASQ) is disordered. Ser-363 bears the Phosphoserine; by CDK1; in vitro mark. A disordered region spans residues 410–435 (PKDFDKTGQGELGKFTSSPDSPPWLA). Position 465 is a phosphoserine; by CDK1; in vitro (Ser-465). The disordered stretch occupies residues 556 to 624 (RDGEVSSTSE…EITPDNKGIP (69 aa)). Residues 575 to 587 (QDSSSTGMSVTEN) are compositionally biased toward polar residues. Residues 588-604 (QIDRDLSHVDKSIKELS) show a composition bias toward basic and acidic residues. Over residues 608-617 (SQSENSEEIT) the composition is skewed to acidic residues. A phosphoserine; by CDK1; in vitro mark is found at Ser-654 and Ser-677. Thr-748 carries the post-translational modification Phosphothreonine; by CDK1. The 44-residue stretch at 844–887 (HGMEWEELQYQPMSFIPQPDDETDTTYFEARNNAQHLKVSGFSL) folds into the AGC-kinase C-terminal domain.

Belongs to the protein kinase superfamily. AGC Ser/Thr protein kinase family. As to quaternary structure, interacts with arpp19 and ensa, leading to their phosphorylation. Phosphorylation at Thr-748 by CDK1 during M phase activates its kinase activity. Not active during other phases of the cell cycle. Has the ability to autophosphorylate.

It is found in the cytoplasm. The protein resides in the cytoskeleton. The protein localises to the microtubule organizing center. It localises to the centrosome. Its subcellular location is the nucleus. The enzyme catalyses L-seryl-[protein] + ATP = O-phospho-L-seryl-[protein] + ADP + H(+). It carries out the reaction L-threonyl-[protein] + ATP = O-phospho-L-threonyl-[protein] + ADP + H(+). Functionally, serine/threonine kinase that plays a key role in M phase by acting as a regulator of mitosis entry and maintenance. Acts by promoting the inactivation of protein phosphatase 2A (PP2A) during M phase: does not directly inhibit PP2A but acts by mediating phosphorylation and subsequent activation of arpp19 and ensa at 'Ser-67', 2 phosphatase inhibitors that specifically inhibit the ppp2r2d (PR55-delta) subunit of PP2A. Inactivation of PP2A during M phase is essential to keep cyclin-B1-CDK1 activity high. Following DNA damage, it is also involved in checkpoint recovery by being inhibited. The sequence is that of Serine/threonine-protein kinase greatwall (mastl) from Xenopus laevis (African clawed frog).